We begin with the raw amino-acid sequence, 476 residues long: MHLLINIIFLINIIFIISIIFIERRNPQTTWAWILILTFLPILGFIIYILFGQNITREKNFKRKILDDKTKQKYLNSFKSHYKLDNISLKYKDLIMMNFNNDNSTYTQRNDIDLYFDANSLFQEMIYEINKAEKFIHMEFYIFKSDEIGKKILQALTKKAKEGVEVKLLVDSIGNSIHKKDIDKLKAAGGDFKIFFPGFCKYINLRINYRNHRKILIIDSKVAFLGGFNIGDEYLGKDKNIGNWRDTHTKIKGLAINDLEARFLLDWSYANESDLDIDLKKYFINPHSTNLPNNIIGAQIVSSGPDHTEQQIKNGYFKIINSAKKNLFIQTPYFVPDEPMLEALRLAALSGVDVKIMLPGNPDHKFMEWIANSYFESLLNAGVKIYLYEKGFLHAKTIVADSSICSVGTANMDIRSFSLNFESNIFIYNEAISKSMEEQFFKDLKVCTKVTLESFEKRSIISRIGESIIRLVSPLM.

2 helical membrane-spanning segments follow: residues 2 to 22 (HLLINIIFLINIIFIISIIFI) and 31 to 51 (WAWILILTFLPILGFIIYILF). 2 PLD phosphodiesterase domains span residues 207–234 (INYRNHRKILIIDSKVAFLGGFNIGDEY) and 389–416 (EKGFLHAKTIVADSSICSVGTANMDIRS). Residues H212, K214, D219, H394, K396, and D401 contribute to the active site.

The protein belongs to the phospholipase D family. Cardiolipin synthase subfamily.

It localises to the cell membrane. It catalyses the reaction 2 a 1,2-diacyl-sn-glycero-3-phospho-(1'-sn-glycerol) = a cardiolipin + glycerol. Its function is as follows. Catalyzes the reversible phosphatidyl group transfer from one phosphatidylglycerol molecule to another to form cardiolipin (CL) (diphosphatidylglycerol) and glycerol. The chain is Cardiolipin synthase (cls) from Clostridium perfringens (strain SM101 / Type A).